A 180-amino-acid chain; its full sequence is Crossover junction endodeoxyribonuclease RuvC (180 aa).

Residues aspartate 7, glutamate 66, and aspartate 138 contribute to the active site. Mg(2+) is bound by residues aspartate 7, glutamate 66, and aspartate 138.

The protein belongs to the RuvC family. Homodimer which binds Holliday junction (HJ) DNA. The HJ becomes 2-fold symmetrical on binding to RuvC with unstacked arms; it has a different conformation from HJ DNA in complex with RuvA. In the full resolvosome a probable DNA-RuvA(4)-RuvB(12)-RuvC(2) complex forms which resolves the HJ. Requires Mg(2+) as cofactor.

The protein resides in the cytoplasm. The catalysed reaction is Endonucleolytic cleavage at a junction such as a reciprocal single-stranded crossover between two homologous DNA duplexes (Holliday junction).. In terms of biological role, the RuvA-RuvB-RuvC complex processes Holliday junction (HJ) DNA during genetic recombination and DNA repair. Endonuclease that resolves HJ intermediates. Cleaves cruciform DNA by making single-stranded nicks across the HJ at symmetrical positions within the homologous arms, yielding a 5'-phosphate and a 3'-hydroxyl group; requires a central core of homology in the junction. The consensus cleavage sequence is 5'-(A/T)TT(C/G)-3'. Cleavage occurs on the 3'-side of the TT dinucleotide at the point of strand exchange. HJ branch migration catalyzed by RuvA-RuvB allows RuvC to scan DNA until it finds its consensus sequence, where it cleaves and resolves the cruciform DNA. In Burkholderia vietnamiensis (strain G4 / LMG 22486) (Burkholderia cepacia (strain R1808)), this protein is Crossover junction endodeoxyribonuclease RuvC.